Consider the following 1040-residue polypeptide: DNA mismatch repair protein MutS (1040 aa).

Residues 1–10 are compositionally biased toward polar residues; it reads MPVKPSAQNN. 2 disordered regions span residues 1–22 and 130–157; these read MPVKPSAQNNSPSKPTSKSVPV and ATGTDNANNPSNAPTMGDKQKKDKSKST. A compositionally biased stretch (low complexity) spans 11–22; the sequence is SPSKPTSKSVPV. Positions 130 to 143 are enriched in polar residues; sequence ATGTDNANNPSNAP. Residue 759 to 766 participates in ATP binding; that stretch reads GPNMGGKS.

The protein belongs to the DNA mismatch repair MutS family.

In terms of biological role, this protein is involved in the repair of mismatches in DNA. It is possible that it carries out the mismatch recognition step. This protein has a weak ATPase activity. The protein is DNA mismatch repair protein MutS of Psychrobacter cryohalolentis (strain ATCC BAA-1226 / DSM 17306 / VKM B-2378 / K5).